Here is a 139-residue protein sequence, read N- to C-terminus: Basic phospholipase A2 beta-bungarotoxin A2 chain (139 aa).

The first 9 residues, Ala-1–Ala-9, serve as a signal peptide directing secretion. The propeptide occupies Ala-10–Phe-17. Ca(2+) contacts are provided by Tyr-45, Gly-47, and Gly-49. Cys-46 and Cys-62 form a disulfide bridge. His-65 is an active-site residue. Residue Asp-66 participates in Ca(2+) binding.

Belongs to the phospholipase A2 family. Group I subfamily. D49 sub-subfamily. In terms of assembly, heterodimer; disulfide-linked. The A chains have phospholipase A2 activity and the B chains show homology with the basic protease inhibitors. Requires Ca(2+) as cofactor. Expressed by the venom gland.

The protein resides in the secreted. It catalyses the reaction a 1,2-diacyl-sn-glycero-3-phosphocholine + H2O = a 1-acyl-sn-glycero-3-phosphocholine + a fatty acid + H(+). Snake venom phospholipase A2 (PLA2) that shows presynaptic neurotoxicity. PLA2 catalyzes the calcium-dependent hydrolysis of the 2-acyl groups in 3-sn-phosphoglycerides. The sequence is that of Basic phospholipase A2 beta-bungarotoxin A2 chain from Bungarus candidus (Malayan krait).